We begin with the raw amino-acid sequence, 1323 residues long: Tetratricopeptide repeat protein 21 homolog (1323 aa).

17 TPR repeats span residues 56–89 (VPLA…QNFS), 411–444 (ESPF…LIEM), 580–613 (SLYH…PKKE), 667–700 (HQLV…QSNF), 702–735 (LSRI…EPTP), 736–768 (GSYS…QSKD), 770–802 (QLAE…YKDK), 804–835 (MRLK…EPEP), 845–878 (IQFL…HNKI), 892–925 (ARIC…YETD), 927–959 (KSNL…DPHN), 961–993 (EANL…NPLH), 995–1027 (HALF…NPRC), 1031–1064 (AGYS…PNVV), 1203–1236 (EKCW…NCNS), 1238–1270 (RAFE…TNQK), and 1272–1305 (CSFG…NPQY).

The protein belongs to the TTC21 family.

The sequence is that of Tetratricopeptide repeat protein 21 homolog from Caenorhabditis briggsae.